The following is a 438-amino-acid chain: Elongation factor 1-alpha (438 aa).

Positions 6 to 229 constitute a tr-type G domain; sequence KPHLNIVIIG…ALDTLEVPPK (224 aa). The tract at residues 15 to 22 is G1; sequence GHVDHGKS. 15–22 contributes to the GTP binding site; that stretch reads GHVDHGKS. A Mg(2+)-binding site is contributed by Ser22. The G2 stretch occupies residues 71-75; the sequence is GVTIS. Residues 92–95 are G3; the sequence is DAPG. GTP is bound by residues 92–96 and 154–157; these read DAPGH and NKMD. The G4 stretch occupies residues 154-157; sequence NKMD. The segment at 195-197 is G5; the sequence is SAW.

The protein belongs to the TRAFAC class translation factor GTPase superfamily. Classic translation factor GTPase family. EF-Tu/EF-1A subfamily.

The protein resides in the cytoplasm. The enzyme catalyses GTP + H2O = GDP + phosphate + H(+). In terms of biological role, GTP hydrolase that promotes the GTP-dependent binding of aminoacyl-tRNA to the A-site of ribosomes during protein biosynthesis. This chain is Elongation factor 1-alpha, found in Desulfurococcus mucosus (Desulfurococcus mobilis).